The primary structure comprises 257 residues: Tryptophan synthase alpha chain (257 aa).

Catalysis depends on proton acceptor residues Glu-47 and Asp-58.

Belongs to the TrpA family. Tetramer of two alpha and two beta chains.

It carries out the reaction (1S,2R)-1-C-(indol-3-yl)glycerol 3-phosphate + L-serine = D-glyceraldehyde 3-phosphate + L-tryptophan + H2O. It participates in amino-acid biosynthesis; L-tryptophan biosynthesis; L-tryptophan from chorismate: step 5/5. Its function is as follows. The alpha subunit is responsible for the aldol cleavage of indoleglycerol phosphate to indole and glyceraldehyde 3-phosphate. The chain is Tryptophan synthase alpha chain from Listeria innocua serovar 6a (strain ATCC BAA-680 / CLIP 11262).